The chain runs to 253 residues: Phosphate import ATP-binding protein PstB (253 aa).

In terms of domain architecture, ABC transporter spans 1 to 249; the sequence is MKLMDVRVSG…PRHELTKKFL (249 aa). 38-45 contributes to the ATP binding site; that stretch reads GPSGSGKS.

It belongs to the ABC transporter superfamily. Phosphate importer (TC 3.A.1.7) family. As to quaternary structure, the complex is composed of two ATP-binding proteins (PstB), two transmembrane proteins (PstC and PstA) and a solute-binding protein (PstS).

It localises to the cell membrane. The catalysed reaction is phosphate(out) + ATP + H2O = ADP + 2 phosphate(in) + H(+). Part of the ABC transporter complex PstSACB involved in phosphate import. Responsible for energy coupling to the transport system. This is Phosphate import ATP-binding protein PstB from Aeropyrum pernix (strain ATCC 700893 / DSM 11879 / JCM 9820 / NBRC 100138 / K1).